A 473-amino-acid chain; its full sequence is Microtubule-binding protein TANGLED (473 aa).

The tract at residues 1–132 (MVARTPQKQR…VTRDIVDAIA (132 aa)) is required for binding to TAN and location to the cortical division sites (CDS) during cytokinesis. 2 disordered regions span residues 131-218 (IAPK…ENSF) and 290-354 (ASKF…LSTA). 2 stretches are compositionally biased toward polar residues: residues 205–216 (ISPQVKGNNGEN) and 307–329 (PTRN…TRTV).

In terms of assembly, interacts with POK1. Strongly expressed in flower buds and root tips.

It localises to the nucleus. It is found in the nucleolus. Its subcellular location is the cytoplasm. The protein localises to the cytoskeleton. The protein resides in the phragmoplast. Functionally, is required for spatial control cell division during plant development. Through an association with microtubules, acts both for the positioning of cytoskeletal arrays that establish planes of cell division during prophase and for spatial guidance of expanding phragmoplasts toward preestablished cortical division sites (CDS) during cytokinesis. The protein is Microtubule-binding protein TANGLED (TAN) of Arabidopsis thaliana (Mouse-ear cress).